The sequence spans 259 residues: Hemin import ATP-binding protein HmuV (259 aa).

The ABC transporter domain occupies 6–242; the sequence is IQGRDLCVTY…ERIEQVYGYQ (237 aa). Residue 38 to 45 participates in ATP binding; it reads GPNGAGKS.

This sequence belongs to the ABC transporter superfamily. Heme (hemin) importer (TC 3.A.1.14.5) family. The complex is composed of two ATP-binding proteins (HmuV), two transmembrane proteins (HmuU) and a solute-binding protein (HmuT).

Its subcellular location is the cell inner membrane. Part of the ABC transporter complex HmuTUV involved in hemin import. Responsible for energy coupling to the transport system. The protein is Hemin import ATP-binding protein HmuV of Vibrio cholerae serotype O1 (strain ATCC 39315 / El Tor Inaba N16961).